We begin with the raw amino-acid sequence, 158 residues long: Deoxyuridine 5'-triphosphate nucleotidohydrolase (158 aa).

Residues Arg66–Gly68, Asn79, Thr83–Asp85, and Lys93 contribute to the substrate site. The tract at residues Arg139–Ala158 is disordered.

This sequence belongs to the dUTPase family. Requires Mg(2+) as cofactor.

The enzyme catalyses dUTP + H2O = dUMP + diphosphate + H(+). The protein operates within pyrimidine metabolism; dUMP biosynthesis; dUMP from dCTP (dUTP route): step 2/2. Its function is as follows. This enzyme is involved in nucleotide metabolism: it produces dUMP, the immediate precursor of thymidine nucleotides and it decreases the intracellular concentration of dUTP so that uracil cannot be incorporated into DNA. The chain is Deoxyuridine 5'-triphosphate nucleotidohydrolase from Helicobacter hepaticus (strain ATCC 51449 / 3B1).